We begin with the raw amino-acid sequence, 87 residues long: Large ribosomal subunit protein bL27 (87 aa).

The segment covering Met-1–Arg-11 has biased composition (polar residues). The disordered stretch occupies residues Met-1 to Leu-21.

The protein belongs to the bacterial ribosomal protein bL27 family.

This is Large ribosomal subunit protein bL27 from Hydrogenobaculum sp. (strain Y04AAS1).